Reading from the N-terminus, the 101-residue chain is Small ribosomal subunit protein uS14 (101 aa).

It belongs to the universal ribosomal protein uS14 family. As to quaternary structure, part of the 30S ribosomal subunit. Contacts proteins S3 and S10.

Binds 16S rRNA, required for the assembly of 30S particles and may also be responsible for determining the conformation of the 16S rRNA at the A site. The sequence is that of Small ribosomal subunit protein uS14 from Photobacterium profundum (strain SS9).